Here is a 130-residue protein sequence, read N- to C-terminus: Fluoride-specific ion channel FluC (130 aa).

4 helical membrane-spanning segments follow: residues 3–23 (FIFL…YFVG), 39–59 (GTFS…HLAV), 67–87 (FGIF…SYGL), and 102–122 (VSYA…GWFL). Na(+) is bound by residues Gly77 and Thr80.

It belongs to the fluoride channel Fluc/FEX (TC 1.A.43) family.

It is found in the cell inner membrane. It catalyses the reaction fluoride(in) = fluoride(out). Its activity is regulated as follows. Na(+) is not transported, but it plays an essential structural role and its presence is essential for fluoride channel function. Fluoride-specific ion channel. Important for reducing fluoride concentration in the cell, thus reducing its toxicity. In Helicobacter pylori (strain Shi470), this protein is Fluoride-specific ion channel FluC.